The following is a 448-amino-acid chain: Gamete and mating-type specific protein A (448 aa).

Positions M1–G19 are cleaved as a signal peptide. Residues V30–Y157 form the SCP domain. N55, N98, and N119 each carry an N-linked (GlcNAc...) asparagine glycan. Residues P171 to L242 are disordered. The segment covering P178–P236 has biased composition (pro residues). Catalysis depends on residues C262, H397, and N415.

The protein belongs to the peptidase C1 family.

Its subcellular location is the secreted. Its function is as follows. Thiol protease that seems to be involved in the sexual development. The protein is Gamete and mating-type specific protein A (gmsA) of Dictyostelium discoideum (Social amoeba).